A 249-amino-acid chain; its full sequence is Segregation and condensation protein A (249 aa).

This sequence belongs to the ScpA family. In terms of assembly, component of a cohesin-like complex composed of ScpA, ScpB and the Smc homodimer, in which ScpA and ScpB bind to the head domain of Smc. The presence of the three proteins is required for the association of the complex with DNA.

Its subcellular location is the cytoplasm. Functionally, participates in chromosomal partition during cell division. May act via the formation of a condensin-like complex containing Smc and ScpB that pull DNA away from mid-cell into both cell halves. The sequence is that of Segregation and condensation protein A from Listeria innocua serovar 6a (strain ATCC BAA-680 / CLIP 11262).